A 362-amino-acid chain; its full sequence is Oryzain gamma chain (362 aa).

An N-terminal signal peptide occupies residues 1 to 24 (MAHRRIILLLAAAAVAATSAVAAA). A propeptide spans 25 to 144 (SSGFDDSNPI…GNHRMRDAAA (120 aa)) (activation peptide). A glycan (N-linked (GlcNAc...) asparagine) is linked at Asn-128. Disulfide bonds link Cys-166/Cys-209 and Cys-200/Cys-242. Residue Cys-169 is part of the active site. N-linked (GlcNAc...) asparagine glycosylation is present at Asn-258. A disulfide bridge connects residues Cys-300 and Cys-350. Residues His-309 and Asn-329 contribute to the active site.

Belongs to the peptidase C1 family. In terms of tissue distribution, expressed only in seeds.

This is Oryzain gamma chain from Oryza sativa subsp. japonica (Rice).